The sequence spans 433 residues: Signal recognition particle 54 kDa protein (433 aa).

Residues Gly-106 to Thr-113, Asp-186 to Arg-190, and Thr-244 to Asp-247 contribute to the GTP site.

This sequence belongs to the GTP-binding SRP family. SRP54 subfamily. In terms of assembly, part of the signal recognition particle protein translocation system, which is composed of SRP and FtsY. Archaeal SRP consists of a 7S RNA molecule of 300 nucleotides and two protein subunits: SRP54 and SRP19.

It localises to the cytoplasm. It carries out the reaction GTP + H2O = GDP + phosphate + H(+). Involved in targeting and insertion of nascent membrane proteins into the cytoplasmic membrane. Binds to the hydrophobic signal sequence of the ribosome-nascent chain (RNC) as it emerges from the ribosomes. The SRP-RNC complex is then targeted to the cytoplasmic membrane where it interacts with the SRP receptor FtsY. This is Signal recognition particle 54 kDa protein from Pyrobaculum islandicum (strain DSM 4184 / JCM 9189 / GEO3).